A 517-amino-acid chain; its full sequence is Synaptic vesicular amine transporter (517 aa).

Topologically, residues 1–20 (MALSDLVLLRWLRDSRHSRK) are cytoplasmic. A helical transmembrane segment spans residues 21 to 41 (LILFIVFLALLLDNMLLTVVV). The Extracellular portion of the chain corresponds to 42-132 (PIIPSYLYSI…EDKDLLNENV (91 aa)). Residues Asn-56, Asn-83, Asn-84, Asn-91, and Asn-113 are each glycosylated (N-linked (GlcNAc...) asparagine). The interval 100-119 (ESPKATTTQHTVTNTTVPPD) is disordered. Residues 105–115 (TTTQHTVTNTT) show a composition bias toward low complexity. Cys-120 and Cys-327 are joined by a disulfide. Residues 133–153 (QVGLLFASKATVQLLTNPFIG) traverse the membrane as a helical segment. The Cytoplasmic segment spans residues 154–162 (LLTNRIGYP). A helical transmembrane segment spans residues 163–183 (IPMFAGFCIMFISTVMFAFSS). The Extracellular portion of the chain corresponds to 184–192 (SYAFLLIAR). Residues 193–213 (SLQGIGSSCSSVAGMGMLASV) form a helical membrane-spanning segment. Residues 214-222 (YTDDEERGN) are Cytoplasmic-facing. The helical transmembrane segment at 223 to 245 (AMGIALGGLAMGVLVGPPFGSVL) threads the bilayer. Residues Leu-231 and Val-235 each contribute to the serotonin site. The Extracellular segment spans residues 246–251 (YEFVGK). A helical membrane pass occupies residues 252–274 (TAPFLVLAALVLLDGAIQLFVLQ). The Cytoplasmic portion of the chain corresponds to 275-294 (PSRVQPESQKGTPLTTLLKD). Residues 295–314 (PYILIAAGSICFANMGIAML) traverse the membrane as a helical segment. The serotonin site is built by Asn-308, Ile-311, Glu-315, Phe-337, and Tyr-344. The Extracellular portion of the chain corresponds to 315–331 (EPALPIWMMETMCSRKW). Residues 332–355 (QLGVAFLPASISYLIGTNIFGILA) form a helical membrane-spanning segment. The Cytoplasmic portion of the chain corresponds to 356-360 (HKMGR). The helical transmembrane segment at 361–381 (WLCALLGMIVVGISILCIPFA) threads the bilayer. The Extracellular segment spans residues 382–392 (KNIYGLIAPNF). The chain crosses the membrane as a helical span at residues 393 to 413 (GVGFAIGMVDSSMMPIMGYLV). Asp-402 is a binding site for serotonin. At 414–417 (DLRH) the chain is on the cytoplasmic side. The helical transmembrane segment at 418–438 (VSVYGSVYAIADVAFCMGYAI) threads the bilayer. Tyr-436 contributes to the serotonin binding site. The Extracellular segment spans residues 439–443 (GPSAG). Residues 444-465 (GAIAKAIGFPWLMTIIGIIDIV) form a helical membrane-spanning segment. Residues 466–517 (FAPLCFFLRSPPAKEEKMAILMDHNCPIKTKMYTQNNVQPYPVGDDEESESD) lie on the Cytoplasmic side of the membrane. Residues Ser-514 and Ser-516 each carry the phosphoserine; by CK2 modification.

It belongs to the major facilitator superfamily. Vesicular transporter family. Interacts with SLC6A3. As to expression, expressed in striata and substantia nigra.

The protein localises to the cytoplasmic vesicle. The protein resides in the secretory vesicle. It is found in the synaptic vesicle membrane. It localises to the secretory vesicle membrane. Its subcellular location is the cell projection. The protein localises to the axon. The protein resides in the dendrite. The catalysed reaction is serotonin(in) + 2 H(+)(out) = serotonin(out) + 2 H(+)(in). It catalyses the reaction dopamine(in) + 2 H(+)(out) = dopamine(out) + 2 H(+)(in). It carries out the reaction histamine(in) + 2 H(+)(out) = histamine(out) + 2 H(+)(in). With respect to regulation, strongly inhibited by reserpine and tetrabenazine. Also inhibited to a lesser extent by ketanserin and fenfluramine. Reserpine and ketanserin inhibit by blocking the substrate-binding pocket. Tetrabenazine traps SLC18A2/VMAT2 in an occluded conformation and its inhibition is specific to SLC18A2/VMAT2 but not SLC18A1/VMAT1. Electrogenic antiporter that exchanges one cationic monoamine with two intravesicular protons across the membrane of secretory and synaptic vesicles. Uses the electrochemical proton gradient established by the V-type proton-pump ATPase to accumulate high concentrations of monoamines inside the vesicles prior to their release via exocytosis. Transports a variety of catecholamines such as dopamine, adrenaline and noradrenaline, histamine, and indolamines such as serotonin. Regulates the transvesicular monoaminergic gradient that determines the quantal size. Mediates somatodendritic dopamine release in hippocampal neurons, likely as part of a regulated secretory pathway that integrates retrograde synaptic signals. Acts as a primary transporter for striatal dopamine loading ensuring impulse-dependent release of dopamine at the synaptic cleft. Responsible for histamine and serotonin storage and subsequent corelease from mast cell granules. This is Synaptic vesicular amine transporter (Slc18a2) from Mus musculus (Mouse).